A 500-amino-acid chain; its full sequence is Polyenoic fatty acid isomerase (500 aa).

Residues 1-21 form the signal peptide; that stretch reads MSLNRVLHIFLIAYLACTALT.

As to quaternary structure, homodimer. The cofactor is an oxidized flavin. In terms of processing, glycosylated.

It carries out the reaction (5Z,8Z,11Z,14Z,17Z)-eicosapentaenoate = (5Z,7E,9E,14Z,17Z)-icosapentaenoate. Functionally, involved in the biosynthesis of conjugated triene-containing fatty acids. Catalyzes the isomerization of a wide range of substrates containing three or more methylene interrupted olefins into a Z,E,E conjugated triene functionality. May be involved in a stress tolerance mechanism as response to intertidal habitats with direct sunlight, desiccation and high temperature. In vitro substrates include arachidonic acid ((5Z,8Z,11Z,14Z)-eicosatetraenoic acid), EPA ((5Z,8Z, 11Z,14Z,17Z)-eicosapentaenoic acid), DHA ((4Z,7Z,10Z,13Z,16Z,19Z)-docosahexenoic acid), adrenic acid ((7Z,10Z,13Z,16Z)-docosatetraenoic acid), anandamide (arachidonyl-N-ethanolamide) and eicosatrienoic acid ((5Z,8Z,11Z)-eicosatrienoic acid). Gamma-linolenic acid (18:3 6Z,9Z,12Z) and dihomo-gamma-linolenic acid (20:3 8Z,11Z,14Z) are transformed into mixtures of conjugated diene and triene fatty acids, linoleic acid is only transformed to a conjugated diene. In Ptilota filicina (Red alga), this protein is Polyenoic fatty acid isomerase.